The following is a 200-amino-acid chain: Holliday junction branch migration complex subunit RuvA (200 aa).

Residues 1 to 63 form a domain I region; the sequence is MIASVRGEVL…EDSMTLYGFP (63 aa). The tract at residues 64–142 is domain II; it reads DSESKELFGL…AVASTSGAVP (79 aa). Residues 142-146 are flexible linker; it reads PLGAG. Positions 147–200 are domain III; it reads GGGSVRDQIVEALVGLGFPAKQAEQAADSVLAEAPESTTSTALRSALSLLGKTR.

It belongs to the RuvA family. In terms of assembly, homotetramer. Forms an RuvA(8)-RuvB(12)-Holliday junction (HJ) complex. HJ DNA is sandwiched between 2 RuvA tetramers; dsDNA enters through RuvA and exits via RuvB. An RuvB hexamer assembles on each DNA strand where it exits the tetramer. Each RuvB hexamer is contacted by two RuvA subunits (via domain III) on 2 adjacent RuvB subunits; this complex drives branch migration. In the full resolvosome a probable DNA-RuvA(4)-RuvB(12)-RuvC(2) complex forms which resolves the HJ.

Its subcellular location is the cytoplasm. Its function is as follows. The RuvA-RuvB-RuvC complex processes Holliday junction (HJ) DNA during genetic recombination and DNA repair, while the RuvA-RuvB complex plays an important role in the rescue of blocked DNA replication forks via replication fork reversal (RFR). RuvA specifically binds to HJ cruciform DNA, conferring on it an open structure. The RuvB hexamer acts as an ATP-dependent pump, pulling dsDNA into and through the RuvAB complex. HJ branch migration allows RuvC to scan DNA until it finds its consensus sequence, where it cleaves and resolves the cruciform DNA. The protein is Holliday junction branch migration complex subunit RuvA of Rhodococcus jostii (strain RHA1).